Reading from the N-terminus, the 269-residue chain is Monofunctional glycosyltransferase (269 aa).

A helical membrane pass occupies residues 46-66; that stretch reads ILLTILIIIALFIGIMYFLST.

It belongs to the glycosyltransferase 51 family.

The protein localises to the cell membrane. The enzyme catalyses [GlcNAc-(1-&gt;4)-Mur2Ac(oyl-L-Ala-gamma-D-Glu-L-Lys-D-Ala-D-Ala)](n)-di-trans,octa-cis-undecaprenyl diphosphate + beta-D-GlcNAc-(1-&gt;4)-Mur2Ac(oyl-L-Ala-gamma-D-Glu-L-Lys-D-Ala-D-Ala)-di-trans,octa-cis-undecaprenyl diphosphate = [GlcNAc-(1-&gt;4)-Mur2Ac(oyl-L-Ala-gamma-D-Glu-L-Lys-D-Ala-D-Ala)](n+1)-di-trans,octa-cis-undecaprenyl diphosphate + di-trans,octa-cis-undecaprenyl diphosphate + H(+). It functions in the pathway cell wall biogenesis; peptidoglycan biosynthesis. Peptidoglycan polymerase that catalyzes glycan chain elongation using lipid-linked disaccharide-pentapeptide as the substrate. In Staphylococcus aureus (strain Newman), this protein is Monofunctional glycosyltransferase.